Reading from the N-terminus, the 182-residue chain is T-cell surface glycoprotein CD3 gamma chain (182 aa).

Positions 1-22 (MEQGKGLAVLILAIILLQGTLA) are cleaved as a signal peptide. Residues 23–116 (QSIKGNHLVK…CIELNAATIS (94 aa)) lie on the Extracellular side of the membrane. In terms of domain architecture, Ig-like spans 37–94 (QEDGSVLLTCDAEAKNITWFKDGKMIGFLTEDKKKWNLGSNAKDPRGMYQCKGSQNKS). Cysteines 46 and 87 form a disulfide. 2 N-linked (GlcNAc...) asparagine glycosylation sites follow: Asn-52 and Asn-92. A helical transmembrane segment spans residues 117–137 (GFLFAEIVSIFVLAVGVYFIA). At 138-182 (GQDGVRQSRASDKQTLLPNDQLYQPLKDREDDQYSHLQGNQLRRN) the chain is on the cytoplasmic side. Ser-145 carries the phosphoserine modification. Ser-148 carries the phosphoserine; by PKC modification. The ITAM domain maps to 149–177 (DKQTLLPNDQLYQPLKDREDDQYSHLQGN). The Di-leucine motif signature appears at 153 to 154 (LL).

As to quaternary structure, the TCR-CD3 complex is composed of a CD3D/CD3E and a CD3G/CD3E heterodimers that preferentially associate with TCRalpha and TCRbeta, respectively, to form TCRalpha/CD3E/CD3G and TCRbeta/CD3G/CD3E trimers. In turn, the hexamer interacts with CD3Z homodimer to form the TCR-CD3 complex. Alternatively, TCRalpha and TCRbeta can be replaced by TCRgamma and TCRdelta. In terms of processing, phosphorylated on Tyr residues after T-cell receptor triggering by LCK in association with CD4/CD8. Phosphorylated also by PKC; leading to the TCR complex down-regulation. Phosphorylated on Tyr residues after T-cell receptor triggering by LCK in association with CD4/CD8.

The protein localises to the cell membrane. Its function is as follows. Part of the TCR-CD3 complex present on T-lymphocyte cell surface that plays an essential role in adaptive immune response. When antigen presenting cells (APCs) activate T-cell receptor (TCR), TCR-mediated signals are transmitted across the cell membrane by the CD3 chains CD3D, CD3E, CD3G and CD3Z. All CD3 chains contain immunoreceptor tyrosine-based activation motifs (ITAMs) in their cytoplasmic domain. Upon TCR engagement, these motifs become phosphorylated by Src family protein tyrosine kinases LCK and FYN, resulting in the activation of downstream signaling pathways. In addition to this role of signal transduction in T-cell activation, CD3G plays an essential role in the dynamic regulation of TCR expression at the cell surface. Indeed, constitutive TCR cycling is dependent on the di-leucine-based (diL) receptor-sorting motif present in CD3G. The sequence is that of T-cell surface glycoprotein CD3 gamma chain (CD3G) from Homo sapiens (Human).